We begin with the raw amino-acid sequence, 654 residues long: Beta-galactosidase-1-like protein (654 aa).

A signal peptide spans 1-27; sequence MAPKKPSCLRSLLLPLSLTLLLPQADT. Asn-97 is a glycosylation site (N-linked (GlcNAc...) asparagine). The active-site Proton donor is the Glu-186. Residue Asn-243 is glycosylated (N-linked (GlcNAc...) asparagine). The active-site Nucleophile is the Glu-264.

Belongs to the glycosyl hydrolase 35 family.

The protein resides in the secreted. In terms of biological role, probable glycosyl hydrolase. This Macaca fascicularis (Crab-eating macaque) protein is Beta-galactosidase-1-like protein (GLB1L).